The sequence spans 104 residues: Type VII secretion system extracellular protein B (104 aa).

Belongs to the WXG100 family. Homodimer. When mixed with EsxA does not form heterodimers.

It is found in the secreted. Virulence factor that is important for the establishment of infection in the host. EsxB is required for EsxA synthesis as well as secretion. Mediates together with EsxA the release of S.aureus from the host cell. Also inhibits host cytokine production and thus modulates dendritic cell-mediated immunity. The chain is Type VII secretion system extracellular protein B from Staphylococcus aureus (strain Mu50 / ATCC 700699).